The sequence spans 446 residues: ATP-dependent protease ATPase subunit HslU (446 aa).

Residues Val-18, 60–65 (GVGKTE), Asp-259, Glu-324, and Arg-396 contribute to the ATP site.

Belongs to the ClpX chaperone family. HslU subfamily. In terms of assembly, a double ring-shaped homohexamer of HslV is capped on each side by a ring-shaped HslU homohexamer. The assembly of the HslU/HslV complex is dependent on binding of ATP.

The protein resides in the cytoplasm. In terms of biological role, ATPase subunit of a proteasome-like degradation complex; this subunit has chaperone activity. The binding of ATP and its subsequent hydrolysis by HslU are essential for unfolding of protein substrates subsequently hydrolyzed by HslV. HslU recognizes the N-terminal part of its protein substrates and unfolds these before they are guided to HslV for hydrolysis. In Acidovorax ebreus (strain TPSY) (Diaphorobacter sp. (strain TPSY)), this protein is ATP-dependent protease ATPase subunit HslU.